The following is a 234-amino-acid chain: Glucosamine-6-phosphate deaminase (234 aa).

Asp-62 acts as the Proton acceptor; for enolization step in catalysis. Catalysis depends on Asn-128, which acts as the For ring-opening step. His-130 (proton acceptor; for ring-opening step) is an active-site residue. Glu-135 serves as the catalytic For ring-opening step.

The protein belongs to the glucosamine/galactosamine-6-phosphate isomerase family. NagB subfamily.

It carries out the reaction alpha-D-glucosamine 6-phosphate + H2O = beta-D-fructose 6-phosphate + NH4(+). Its pathway is amino-sugar metabolism; N-acetylneuraminate degradation; D-fructose 6-phosphate from N-acetylneuraminate: step 5/5. Functionally, catalyzes the reversible isomerization-deamination of glucosamine 6-phosphate (GlcN6P) to form fructose 6-phosphate (Fru6P) and ammonium ion. The polypeptide is Glucosamine-6-phosphate deaminase (Lactobacillus delbrueckii subsp. bulgaricus (strain ATCC 11842 / DSM 20081 / BCRC 10696 / JCM 1002 / NBRC 13953 / NCIMB 11778 / NCTC 12712 / WDCM 00102 / Lb 14)).